Consider the following 622-residue polypeptide: DNA polymerase II small subunit (622 aa).

Residues 76–113 (ISTGEGSQKVPDHEELEKITNESSVESSISTGETPKTE) form a disordered region. Basic and acidic residues predominate over residues 85–95 (VPDHEELEKIT). A compositionally biased stretch (polar residues) spans 96 to 109 (NESSVESSISTGET).

The protein belongs to the DNA polymerase delta/II small subunit family. As to quaternary structure, heterodimer of a large subunit and a small subunit.

It catalyses the reaction DNA(n) + a 2'-deoxyribonucleoside 5'-triphosphate = DNA(n+1) + diphosphate. The catalysed reaction is Exonucleolytic cleavage in the 3'- to 5'-direction to yield nucleoside 5'-phosphates.. Possesses two activities: a DNA synthesis (polymerase) and an exonucleolytic activity that degrades single-stranded DNA in the 3' to 5' direction. Has a template-primer preference which is characteristic of a replicative DNA polymerase. This chain is DNA polymerase II small subunit (polB), found in Pyrococcus horikoshii (strain ATCC 700860 / DSM 12428 / JCM 9974 / NBRC 100139 / OT-3).